A 408-amino-acid polypeptide reads, in one-letter code: Argininosuccinate synthase (408 aa).

ATP-binding positions include 8–16 (AYSGGLDTT) and A35. L-citrulline-binding residues include Y86 and S91. G116 lines the ATP pocket. T118, N122, and D123 together coordinate L-aspartate. N122 contributes to the L-citrulline binding site. L-citrulline contacts are provided by R126, S177, S186, E263, and Y275.

The protein belongs to the argininosuccinate synthase family. Type 1 subfamily. As to quaternary structure, homotetramer.

The protein localises to the cytoplasm. It carries out the reaction L-citrulline + L-aspartate + ATP = 2-(N(omega)-L-arginino)succinate + AMP + diphosphate + H(+). The protein operates within amino-acid biosynthesis; L-arginine biosynthesis; L-arginine from L-ornithine and carbamoyl phosphate: step 2/3. This chain is Argininosuccinate synthase, found in Lachnospira eligens (strain ATCC 27750 / DSM 3376 / VPI C15-48 / C15-B4) (Eubacterium eligens).